A 192-amino-acid polypeptide reads, in one-letter code: Large ribosomal subunit protein bL25 (192 aa).

Belongs to the bacterial ribosomal protein bL25 family. CTC subfamily. As to quaternary structure, part of the 50S ribosomal subunit; part of the 5S rRNA/L5/L18/L25 subcomplex. Contacts the 5S rRNA. Binds to the 5S rRNA independently of L5 and L18.

Its function is as follows. This is one of the proteins that binds to the 5S RNA in the ribosome where it forms part of the central protuberance. This Cytophaga hutchinsonii (strain ATCC 33406 / DSM 1761 / CIP 103989 / NBRC 15051 / NCIMB 9469 / D465) protein is Large ribosomal subunit protein bL25.